The following is a 96-amino-acid chain: uncharacterized protein (96 aa).

A signal peptide spans 1–19 (MKQIIPALITLSFSPMAIA).

This is an uncharacterized protein from Synechocystis sp. (strain ATCC 27184 / PCC 6803 / Kazusa).